The following is a 201-amino-acid chain: Glycerol-3-phosphate acyltransferase (201 aa).

The next 6 helical transmembrane spans lie at 10–30 (MLIG…GLIL), 60–80 (LAAA…LIAA), 86–106 (AAIA…WIGF), 116–136 (LGVL…AWIV), 139–159 (LLTR…PIAL), and 166–186 (ALAA…RANI).

Belongs to the PlsY family. In terms of assembly, probably interacts with PlsX.

It localises to the cell inner membrane. The catalysed reaction is an acyl phosphate + sn-glycerol 3-phosphate = a 1-acyl-sn-glycero-3-phosphate + phosphate. It participates in lipid metabolism; phospholipid metabolism. In terms of biological role, catalyzes the transfer of an acyl group from acyl-phosphate (acyl-PO(4)) to glycerol-3-phosphate (G3P) to form lysophosphatidic acid (LPA). This enzyme utilizes acyl-phosphate as fatty acyl donor, but not acyl-CoA or acyl-ACP. The protein is Glycerol-3-phosphate acyltransferase of Brucella suis (strain ATCC 23445 / NCTC 10510).